The primary structure comprises 216 residues: Ribonuclease HII (216 aa).

Residues 33–216 (WPVAGADEAG…RMSFRPFRQL (184 aa)) enclose the RNase H type-2 domain. 3 residues coordinate a divalent metal cation: Asp-39, Glu-40, and Asp-130.

It belongs to the RNase HII family. Mn(2+) is required as a cofactor. It depends on Mg(2+) as a cofactor.

It localises to the cytoplasm. The enzyme catalyses Endonucleolytic cleavage to 5'-phosphomonoester.. Endonuclease that specifically degrades the RNA of RNA-DNA hybrids. In Sinorhizobium medicae (strain WSM419) (Ensifer medicae), this protein is Ribonuclease HII.